The sequence spans 221 residues: uncharacterized protein (221 aa).

The signal sequence occupies residues 1–23 (MNKLIQLALFFTLMLTGCSNSST). Residues 67–221 (ELGKRKAKEE…QGYIDPEDAP (155 aa)) form a disordered region. Basic and acidic residues predominate over residues 68–150 (LGKRKAKEEA…EQKANAEKKR (83 aa)). Residues 70–161 (KRKAKEEAEK…SQAQRQQTEA (92 aa)) are a coiled coil. Residues 152-161 (SQAQRQQTEA) are compositionally biased toward polar residues. Low complexity predominate over residues 162-174 (PSSNSQDPPSSSS). Residues 175 to 184 (QTDKTIQQPA) show a composition bias toward polar residues. Positions 195 to 205 (YEERKKWHDDQ) are enriched in basic and acidic residues.

This is an uncharacterized protein from Bacillus subtilis (strain 168).